The primary structure comprises 451 residues: UPF0210 protein CLL_A1718 (451 aa).

The protein belongs to the UPF0210 family. As to quaternary structure, homodimer.

In Clostridium botulinum (strain Eklund 17B / Type B), this protein is UPF0210 protein CLL_A1718.